Here is an 80-residue protein sequence, read N- to C-terminus: Putative DNA-directed RNA polymerase subunit omega (80 aa).

This sequence belongs to the RNA polymerase subunit omega family.

The protein resides in the plastid. Its subcellular location is the chloroplast. It catalyses the reaction RNA(n) + a ribonucleoside 5'-triphosphate = RNA(n+1) + diphosphate. May be involved in RNA polymerase activity. This chain is Putative DNA-directed RNA polymerase subunit omega, found in Gracilaria tenuistipitata var. liui (Red alga).